The sequence spans 391 residues: S-adenosylmethionine synthase (391 aa).

His19 contacts ATP. A Mg(2+)-binding site is contributed by Asp21. Residue Glu47 coordinates K(+). L-methionine-binding residues include Glu60 and Gln103. Residues 103 to 113 (QSADIAQGVDR) form a flexible loop region. ATP-binding positions include 168 to 170 (DGK), 236 to 237 (RF), Asp245, 251 to 252 (RK), Ala268, and Lys272. An L-methionine-binding site is contributed by Asp245. Lys276 serves as a coordination point for L-methionine.

It belongs to the AdoMet synthase family. As to quaternary structure, homotetramer; dimer of dimers. It depends on Mg(2+) as a cofactor. The cofactor is K(+).

The protein resides in the cytoplasm. It catalyses the reaction L-methionine + ATP + H2O = S-adenosyl-L-methionine + phosphate + diphosphate. It participates in amino-acid biosynthesis; S-adenosyl-L-methionine biosynthesis; S-adenosyl-L-methionine from L-methionine: step 1/1. Functionally, catalyzes the formation of S-adenosylmethionine (AdoMet) from methionine and ATP. The overall synthetic reaction is composed of two sequential steps, AdoMet formation and the subsequent tripolyphosphate hydrolysis which occurs prior to release of AdoMet from the enzyme. This chain is S-adenosylmethionine synthase, found in Nitratidesulfovibrio vulgaris (strain ATCC 29579 / DSM 644 / CCUG 34227 / NCIMB 8303 / VKM B-1760 / Hildenborough) (Desulfovibrio vulgaris).